Consider the following 165-residue polypeptide: Myosin regulatory light chain 2B, cardiac muscle isoform (165 aa).

Position 2 is a n,N,N-trimethylalanine (alanine 2). 3 consecutive EF-hand domains span residues 23–58, 93–128, and 129–164; these read TQIQEFKEAFTIMDQNRDGFIDKADLRDTFAALGRL, DPEETILNAFKIFDPEGKGHIKADYIKEMLMTQEGR, and FSQEEINQMFAAFPPDVSGNLDYKNLCYVITHGEEK. Ca(2+) contacts are provided by aspartate 36, asparagine 38, aspartate 40, and aspartate 47.

As to quaternary structure, myosin is a hexamer of 2 heavy chains and 4 light chains. Post-translationally, the N-terminus is blocked. N,N,N-trimethylalanine, found in other myosin light chains would not have been detected in the N-terminal tryptic peptide in PubMed:7319048 because it would remain trimethylated and ninhydrin negative after hydrolysis.

The protein is Myosin regulatory light chain 2B, cardiac muscle isoform of Gallus gallus (Chicken).